A 145-amino-acid chain; its full sequence is Putative antiporter subunit mnhG2 (145 aa).

A run of 3 helical transmembrane segments spans residues 11–31 (IAAVMLLLGSFIALISAIGIV), 51–71 (VLLTLIGVLIYFIVNTGFFSV), and 72–92 (RLLLSLVFINLTSPVGMHLVA).

This sequence belongs to the CPA3 antiporters (TC 2.A.63) subunit G family. May form a heterooligomeric complex that consists of seven subunits: mnhA2, mnhB2, mnhC2, mnhD2, mnhE2, mnhF2 and mnhG2.

It localises to the cell membrane. The protein is Putative antiporter subunit mnhG2 (mnhG2) of Staphylococcus aureus (strain JH9).